The chain runs to 352 residues: Ion-translocating oxidoreductase complex subunit D (352 aa).

The next 4 helical transmembrane spans lie at 20-40 (IMLL…WFFG), 42-62 (GTLV…ALVL), 89-109 (IPPL…VIIA), and 123-143 (PAMI…TSWL). Thr-187 carries the FMN phosphoryl threonine modification. A run of 5 helical transmembrane segments spans residues 214–234 (ILAG…GLWL), 242–262 (WHIP…GWLF), 267–287 (LAAP…FFIL), 301–321 (LIFG…GGYP), and 322–342 (DGVA…DYYT).

It belongs to the NqrB/RnfD family. In terms of assembly, the complex is composed of six subunits: RsxA, RsxB, RsxC, RsxD, RsxE and RsxG. FMN serves as cofactor.

Its subcellular location is the cell inner membrane. In terms of biological role, part of a membrane-bound complex that couples electron transfer with translocation of ions across the membrane. Required to maintain the reduced state of SoxR. This is Ion-translocating oxidoreductase complex subunit D from Shigella sonnei (strain Ss046).